The chain runs to 516 residues: Rho guanine nucleotide exchange factor 9 (516 aa).

One can recognise an SH3 domain in the interval 8-67 (DSIVSAEAVWDHVTMANRELAFKAGDVIKVLDASNKDWWWGQIDDEEGWFPASFVRLWVN). An interaction with GPHN region spans residues 100–110 (RDQMRANVINE). The 185-residue stretch at 103 to 287 (MRANVINEIM…RNVTQQINER (185 aa)) folds into the DH domain. The PH domain occupies 318 to 425 (ELIYTGEMAW…WLRAFREERK (108 aa)). A disordered region spans residues 450-480 (RKASKQKGVNSARSVPPSYPPPQDPLNQGQY). Ser502 is modified (phosphoserine).

As to quaternary structure, interacts with GPHN. As to expression, detected in embryonic and adult brain.

Its subcellular location is the cytoplasm. The protein resides in the postsynaptic density. Acts as a guanine nucleotide exchange factor (GEF) for CDC42. Promotes formation of GPHN clusters. This is Rho guanine nucleotide exchange factor 9 (Arhgef9) from Mus musculus (Mouse).